Reading from the N-terminus, the 1818-residue chain is Nestin (1818 aa).

Positions 1-14 (WREKLEAEVQRQNL) are coil 1B. Residues 1–135 (WREKLEAEVQ…TLLEAENSRL (135 aa)) form the IF rod domain. The interval 15 to 17 (YQE) is linker 2. The coil 2B stretch occupies residues 18 to 135 (RVAHMESSLG…TLLEAENSRL (118 aa)). The residue at position 133 (Ser133) is a Phosphoserine. The tract at residues 136–1818 (QTPGRSSQAS…DRDSWSSGED (1683 aa)) is tail. Phosphothreonine occurs at positions 137 and 160. Position 180 is a phosphoserine (Ser180). Thr210 is modified (phosphothreonine). Disordered regions lie at residues 266 to 309 (EEAG…GSSI), 336 to 355 (AQET…SQGP), 377 to 451 (HETP…SPEG), and 480 to 787 (AFKK…EEDQ). At Ser288 the chain carries Phosphoserine. Over residues 292–303 (PVLEAKDGDSTE) the composition is skewed to basic and acidic residues. Residues 382–398 (KENCNSLRSVDENQGTL) are compositionally biased toward polar residues. Residues Ser390 and Ser400 each carry the phosphoserine modification. Basic and acidic residues-rich tracts occupy residues 400-427 (SPEE…EKGV) and 434-443 (LGKEDPRIED). Phosphoserine is present on Ser448. Positions 495 to 508 (EIQRVERLIEKEGQ) are enriched in basic and acidic residues. Phosphoserine is present on Ser513. Composition is skewed to basic and acidic residues over residues 521 to 536 (TDRP…LKPV) and 565 to 586 (TDRP…KEGQ). At Ser591 the chain carries Phosphoserine. Composition is skewed to basic and acidic residues over residues 599–614 (TDRP…LKPV), 643–664 (TDRP…KEGQ), and 711–732 (TDRP…KEGQ). Ser737 carries the phosphoserine modification. The span at 744–773 (ETYRLLEKENGEPLKPVEEEDQRVERLIEK) shows a compositional bias: basic and acidic residues. 2 positions are modified to phosphoserine: Ser803 and Ser824. The tract at residues 866-900 (ESLLKKGTQESLESHEDRNQETQDPQRFLEEEGQG) is disordered. Residues 868–886 (LLKKGTQESLESHEDRNQE) are compositionally biased toward basic and acidic residues. A phosphoserine mark is found at Ser915 and Ser957. Positions 945 to 998 (SLLERESQDSGKSLEGQEAFRCLGKEDPESLQFPEVQDQEIQRSLQQETQQTLG) are disordered. The segment covering 986–997 (QRSLQQETQQTL) has biased composition (polar residues). Lys1043 participates in a covalent cross-link: Glycyl lysine isopeptide (Lys-Gly) (interchain with G-Cter in SUMO1); alternate. Lys1043 participates in a covalent cross-link: Glycyl lysine isopeptide (Lys-Gly) (interchain with G-Cter in SUMO2); alternate. Ser1052, Ser1063, Ser1073, Ser1123, Ser1134, Ser1162, and Ser1238 each carry phosphoserine. Disordered regions lie at residues 1134–1262 (SPEA…LEGQ) and 1334–1818 (HPSL…SGED). 2 stretches are compositionally biased toward basic and acidic residues: residues 1342–1361 (VEAK…KEAG) and 1401–1416 (ASDH…RPSE). Over residues 1490-1505 (QDWEESREESEADELG) the composition is skewed to acidic residues. 3 positions are modified to phosphoserine: Ser1495, Ser1499, and Ser1523. Acidic residues predominate over residues 1570–1579 (LSSEEFEDLG). A phosphoserine mark is found at Ser1614 and Ser1623. Residues 1616–1636 (GFADEEESGEEGEEEEHEDGT) are compositionally biased toward acidic residues. A compositionally biased stretch (polar residues) spans 1686-1697 (GLETESQDSAEP). Phosphoserine is present on residues Ser1698, Ser1700, Ser1791, Ser1814, and Ser1815. The segment covering 1698–1708 (SGSEVSESVSS) has biased composition (low complexity).

The protein belongs to the intermediate filament family. In terms of assembly, interacts with FHOD3. Forms homodimers and homotetramers in vitro. In mixtures with other intermediate filament proteins such as vimentin and alpha-internexin, preferentially forms heterodimers which can assemble to form intermediate filaments if nestin does not exceed 25%. In terms of processing, constitutively phosphorylated. This increases during mitosis when the cytoplasmic intermediate filament network is reorganized.

In terms of biological role, required for brain and eye development. Promotes the disassembly of phosphorylated vimentin intermediate filaments (IF) during mitosis and may play a role in the trafficking and distribution of IF proteins and other cellular factors to daughter cells during progenitor cell division. Required for survival, renewal and mitogen-stimulated proliferation of neural progenitor cells. In Mesocricetus auratus (Golden hamster), this protein is Nestin.